The sequence spans 312 residues: Dehydrin CAS31 (312 aa).

Disordered stretches follow at residues 1-88 and 248-287; these read MSQY…HTGG and GTEQNTYGTGTGTGHGTTGYGSTGTGHGTTGYGDEQHHGE. Over residues 21-30 the composition is skewed to polar residues; the sequence is PLTSQGQVDQ. A compositionally biased stretch (gly residues) spans 35 to 46; that stretch reads ISGGGMTGATGH. Low complexity predominate over residues 55–66; it reads HGVGVDQTTGFG. Composition is skewed to gly residues over residues 67–88 and 256–278; these read SNTGTGTGYGTHTGSGGTHTGG and TGTGTGHGTTGYGSTGTGHGTTG.

It belongs to the plant dehydrin family. Interacts with the leghemoglobin LB120-1 in the cytoplasm; this interaction leads to LB120-1 protection from denaturation under thermal and drought stresses. As to expression, expressed in nodules and roots.

It localises to the cytoplasm. Its function is as follows. Intrinsically disordered protein acting as a chaperone. Ensures leghemoglobins (e.g. LB120-1) protection from denaturation under thermal and drought stresses to delay root nodule nitrogenase inactivation and subsequent nodule senescence, thus supporting symbiotic nitrogen fixation (SNF). The polypeptide is Dehydrin CAS31 (Medicago truncatula (Barrel medic)).